The chain runs to 240 residues: Ribosomal RNA small subunit methyltransferase J (240 aa).

Residues 93–94 and Asp162 contribute to the S-adenosyl-L-methionine site; that span reads RD.

This sequence belongs to the methyltransferase superfamily. RsmJ family.

The protein localises to the cytoplasm. The enzyme catalyses guanosine(1516) in 16S rRNA + S-adenosyl-L-methionine = N(2)-methylguanosine(1516) in 16S rRNA + S-adenosyl-L-homocysteine + H(+). Its function is as follows. Specifically methylates the guanosine in position 1516 of 16S rRNA. This is Ribosomal RNA small subunit methyltransferase J from Francisella philomiragia subsp. philomiragia (strain ATCC 25017 / CCUG 19701 / FSC 153 / O#319-036).